Reading from the N-terminus, the 284-residue chain is NAD kinase (284 aa).

Catalysis depends on Asp-67, which acts as the Proton acceptor. NAD(+)-binding positions include 67-68, 141-142, Arg-152, Lys-169, Asp-171, 182-187, and Gln-241; these read DG, ND, and TGYSLS.

It belongs to the NAD kinase family. A divalent metal cation is required as a cofactor.

The protein localises to the cytoplasm. The enzyme catalyses NAD(+) + ATP = ADP + NADP(+) + H(+). Its function is as follows. Involved in the regulation of the intracellular balance of NAD and NADP, and is a key enzyme in the biosynthesis of NADP. Catalyzes specifically the phosphorylation on 2'-hydroxyl of the adenosine moiety of NAD to yield NADP. The polypeptide is NAD kinase (Geobacter sulfurreducens (strain ATCC 51573 / DSM 12127 / PCA)).